The primary structure comprises 428 residues: Probable G-protein coupled receptor (428 aa).

At 1-46 (MMADKTSPMITSDHSISNFSTGLFGPHPTVPPDVGVVTSSQSQMKD) the chain is on the extracellular side. Asparagine 18 carries N-linked (GlcNAc...) asparagine glycosylation. A helical transmembrane segment spans residues 47-67 (LFGLFCMVTLNLIALLANTGV). Over 68–93 (MVAIARAPHLKKFAFVCHLCAVDVLC) the chain is Cytoplasmic. A helical membrane pass occupies residues 94 to 114 (AILLMPLGIISSSPFFGTVVF). Over 115-120 (TILECQ) the chain is Extracellular. The helical transmembrane segment at 121–141 (VYIFLNVFLIWLSILTITAIS) threads the bilayer. The Cytoplasmic portion of the chain corresponds to 142-162 (VERYFYIVHPMRYEVKMTINL). A helical membrane pass occupies residues 163–183 (VIGVMLLIWFKSLLLALVTLF). Residues 184-210 (GWPPYGHQSSIAASHCSLHASHSRLRG) are Extracellular-facing. Residues 211 to 231 (VFAVLFCVICFLAPVVVIFSV) traverse the membrane as a helical segment. The Cytoplasmic segment spans residues 232 to 293 (YSAVYKVARS…PERAFSGGKA (62 aa)). The chain crosses the membrane as a helical span at residues 294-314 (ALTLAFIVGQFLVCWLPFFIF). Over 315–428 (HLQMSLTGSM…IPGQIPEEQA (114 aa)) the chain is Extracellular. A compositionally biased stretch (polar residues) spans 398–414 (SETHPSFANSNPRNMEN). Positions 398 to 428 (SETHPSFANSNPRNMENQAHKIPGQIPEEQA) are disordered.

It belongs to the G-protein coupled receptor 1 family.

Its subcellular location is the cell membrane. This is Probable G-protein coupled receptor from Oryzias latipes (Japanese rice fish).